Consider the following 1119-residue polypeptide: Synaptojanin (1119 aa).

One can recognise an SAC domain in the interval 119–438; the sequence is LQRLLSSQMF…GDQCSTIYAG (320 aa). The catalytic stretch occupies residues 532–826; the sequence is GTWNVNGGKN…DRSELKTSDH (295 aa). Disordered stretches follow at residues 986–1005 and 1042–1119; these read SLTLTGSAPDRPRPPSARSE and EHVP…PKNM. Residues 1050-1072 show a composition bias toward low complexity; sequence PQSNNNKSPPQACLFNPFTQSAP. Pro residues-rich tracts occupy residues 1073 to 1085 and 1093 to 1119; these read SPAPPPSTIPLPP and PGPPAVPVRKAPPPPPRPVIPPRPKNM.

The protein belongs to the synaptojanin family. In the central section; belongs to the inositol 1,4,5-trisphosphate 5-phosphatase family.

It localises to the cytoplasmic vesicle. The protein resides in the secretory vesicle. Its subcellular location is the synaptic vesicle. The protein localises to the synapse. It catalyses the reaction a 1,2-diacyl-sn-glycero-3-phospho-(1D-myo-inositol-4,5-bisphosphate) + H2O = a 1,2-diacyl-sn-glycero-3-phospho-(1D-myo-inositol 4-phosphate) + phosphate. In terms of biological role, probable inositol 5-phosphatase which regulates synaptic vesicle recycling in neurons by regulating clathrin-mediated endocytosis. The protein is Synaptojanin of Caenorhabditis elegans.